Consider the following 159-residue polypeptide: Ribosome maturation factor RimP (159 aa).

The protein belongs to the RimP family.

Its subcellular location is the cytoplasm. Functionally, required for maturation of 30S ribosomal subunits. The polypeptide is Ribosome maturation factor RimP (Geobacter metallireducens (strain ATCC 53774 / DSM 7210 / GS-15)).